Consider the following 277-residue polypeptide: Diaminopimelate epimerase (277 aa).

Substrate contacts are provided by asparagine 13, glutamine 46, and asparagine 66. Residue cysteine 75 is the Proton donor of the active site. Residues 76–77 (GN), asparagine 160, asparagine 193, and 211–212 (ER) contribute to the substrate site. Residue cysteine 220 is the Proton acceptor of the active site. 221 to 222 (GS) serves as a coordination point for substrate.

This sequence belongs to the diaminopimelate epimerase family. Homodimer.

It localises to the cytoplasm. It catalyses the reaction (2S,6S)-2,6-diaminopimelate = meso-2,6-diaminopimelate. It functions in the pathway amino-acid biosynthesis; L-lysine biosynthesis via DAP pathway; DL-2,6-diaminopimelate from LL-2,6-diaminopimelate: step 1/1. In terms of biological role, catalyzes the stereoinversion of LL-2,6-diaminopimelate (L,L-DAP) to meso-diaminopimelate (meso-DAP), a precursor of L-lysine and an essential component of the bacterial peptidoglycan. This chain is Diaminopimelate epimerase, found in Legionella pneumophila (strain Corby).